A 320-amino-acid polypeptide reads, in one-letter code: o-succinylbenzoate synthase (320 aa).

K133 acts as the Proton donor in catalysis. D161, E190, and D213 together coordinate Mg(2+). K235 (proton acceptor) is an active-site residue.

Belongs to the mandelate racemase/muconate lactonizing enzyme family. MenC type 1 subfamily. A divalent metal cation serves as cofactor.

The catalysed reaction is (1R,6R)-6-hydroxy-2-succinyl-cyclohexa-2,4-diene-1-carboxylate = 2-succinylbenzoate + H2O. It functions in the pathway quinol/quinone metabolism; 1,4-dihydroxy-2-naphthoate biosynthesis; 1,4-dihydroxy-2-naphthoate from chorismate: step 4/7. The protein operates within quinol/quinone metabolism; menaquinone biosynthesis. Functionally, converts 2-succinyl-6-hydroxy-2,4-cyclohexadiene-1-carboxylate (SHCHC) to 2-succinylbenzoate (OSB). The chain is o-succinylbenzoate synthase from Escherichia coli (strain K12 / MC4100 / BW2952).